The following is a 366-amino-acid chain: Histidinol-phosphate aminotransferase (366 aa).

K227 bears the N6-(pyridoxal phosphate)lysine mark.

This sequence belongs to the class-II pyridoxal-phosphate-dependent aminotransferase family. Histidinol-phosphate aminotransferase subfamily. Homodimer. Requires pyridoxal 5'-phosphate as cofactor.

The enzyme catalyses L-histidinol phosphate + 2-oxoglutarate = 3-(imidazol-4-yl)-2-oxopropyl phosphate + L-glutamate. It functions in the pathway amino-acid biosynthesis; L-histidine biosynthesis; L-histidine from 5-phospho-alpha-D-ribose 1-diphosphate: step 7/9. The sequence is that of Histidinol-phosphate aminotransferase from Campylobacter hominis (strain ATCC BAA-381 / DSM 21671 / CCUG 45161 / LMG 19568 / NCTC 13146 / CH001A).